Consider the following 384-residue polypeptide: Cytochrome b (384 aa).

Transmembrane regions (helical) follow at residues 32–52 (FGFL…FLAI), 76–98 (WLLR…IHIS), 113–133 (TWVV…MGYV), and 179–199 (FFSF…VHMA). Residues H82 and H96 each contribute to the heme b site. Residues H183 and H197 each coordinate heme b. H202 contributes to the a ubiquinone binding site. 4 helical membrane-spanning segments follow: residues 225 to 245 (FIIK…LFVY), 289 to 309 (LGGV…PWIT), 321 to 341 (LYKK…WIGG), and 348 to 368 (YVVI…IFIP).

It belongs to the cytochrome b family. The main subunits of complex b-c1 are: cytochrome b, cytochrome c1 and the Rieske protein. Requires heme b as cofactor.

It is found in the mitochondrion inner membrane. Component of the ubiquinol-cytochrome c reductase complex (complex III or cytochrome b-c1 complex) that is part of the mitochondrial respiratory chain. The b-c1 complex mediates electron transfer from ubiquinol to cytochrome c. Contributes to the generation of a proton gradient across the mitochondrial membrane that is then used for ATP synthesis. The sequence is that of Cytochrome b (MT-CYB) from Cyanidium caldarium (Red alga).